Reading from the N-terminus, the 1493-residue chain is Protein RNA-directed DNA methylation 3 (1493 aa).

2 disordered regions span residues 1–34 and 54–96; these read MDRKGKGKQVAGSDSYSGGQKRKNSVEFRDEGLR and GYYG…SSFV. The Nuclear localization signal motif lies at 21 to 28; the sequence is KRKNSVEF. A compositionally biased stretch (basic and acidic residues) spans 24 to 34; the sequence is NSVEFRDEGLR. The segment covering 60–80 has biased composition (acidic residues); sequence SDEDDDGLGFLNDMEDEPEVE. Residues 81 to 92 are compositionally biased toward basic and acidic residues; that stretch reads ESSKAGKGEKGK. A KOW 1 domain is found at 239 to 266; it reads KVSEGTWARVKNGKYKGDLAQIVAVSDT. Positions 393 to 432 are disordered; sequence PTCREGGKGEGSGGGKGEGSGGGKGEGSRGGKGEGSSDFK. Over residues 401–417 the composition is skewed to gly residues; it reads GEGSGGGKGEGSGGGKG. Basic and acidic residues predominate over residues 418-432; that stretch reads EGSRGGKGEGSSDFK. A KOW 2 domain is found at 501 to 528; that stretch reads QISVNDVVKISKGPSEGKQGVVRQVYRG. The tract at residues 578 to 602 is disordered; it reads SSPKSPLSPEKEWQPRERYNSSNQG. Residues 586–596 show a composition bias toward basic and acidic residues; it reads PEKEWQPRERY. A KOW 3 domain is found at 607-634; the sequence is TYSIGQKLRIRVGPLKGYLCRVIALRYS. 3 disordered regions span residues 692–711, 728–747, and 757–1493; these read IGAGTSSEGGNWNIGGPSTD, EKNPWGGSKPTSDVSPTVAD, and AAEN…KTGW. Residues 732–741 form repeat 1; the sequence is WGGSKPTSDV. The 42 X 9 AA approximate WG/GW-rich tandem repeats stretch occupies residues 732-1493; that stretch reads WGGSKPTSDV…WGTGDKKTGW (762 aa). Over residues 757-767 the composition is skewed to low complexity; the sequence is AAENKPASASD. Repeat copies occupy residues 775–784, 789–797, 818–827, 836–845, 854–863, 866–875, 883–892, 917–926, 935–943, 944–953, 954–962, 963–972, 978–987, 1003–1012, 1013–1022, 1023–1032, 1033–1042, 1043–1052, 1053–1062, 1063–1072, 1073–1082, 1132–1141, 1144–1153, 1156–1165, 1167–1176, 1180–1189, 1192–1201, 1204–1213, 1217–1226, 1229–1238, 1241–1250, 1253–1262, 1266–1275, 1278–1287, 1290–1299, 1302–1311, and 1314–1323. The segment covering 790-812 has biased composition (polar residues); the sequence is GDTSASNVEASSWEKQGASTSNV. Residues 846–860 show a composition bias toward basic and acidic residues; that stretch reads SQKKEESSWGKKGGS. Over residues 866–875 the composition is skewed to polar residues; the sequence is WGNKDGNSSA. The span at 955–1090 shows a compositional bias: basic and acidic residues; sequence GKKDDGGSWG…YSEQTFDRGG (136 aa). Residues 1122–1134 show a composition bias toward low complexity; sequence PWSKPSGGSSWGK. Polar residues predominate over residues 1156–1172; it reads WGKQDNGVGSSWGKQND. The span at 1186–1213 shows a compositional bias: gly residues; the sequence is AGGGSSWGKQDSGGDGSSWGKQDGGGDS. Over residues 1218–1231 the composition is skewed to polar residues; it reads GKQNNTSGGSSWGK. A compositionally biased stretch (gly residues) spans 1235–1264; the sequence is AGGGSSWGKQDGGGGGSSWGKQDGGGGSGS. Positions 1270–1283 are enriched in polar residues; it reads NETSNGSSWGKQND. The span at 1284–1321 shows a compositional bias: gly residues; the sequence is SGGGSSWGKQDGGGGGSSWGKQNDGGGGSSWGKQGDGG. Polar residues-rich tracts occupy residues 1366–1382 and 1392–1401; these read WKTDNQENTWKSDQSGG and DSNNSKPSGS. Repeat unit 39 spans residues 1389–1398; the sequence is WGEDSNNSKP. Over residues 1416–1430 the composition is skewed to basic and acidic residues; that stretch reads NSKKETNDKPGDDSK. Residues 1432 to 1442 show a composition bias toward polar residues; that stretch reads AWGTSNDQVNT. Repeat copies occupy residues 1433 to 1442, 1467 to 1475, and 1484 to 1493.

Interacts with AGO4 via its C-terminal region and with RNA transcripts. Binds chromatin at loci subject to transcriptional silencing downstream of RNA Polymerase V, but independently from the presence of 24-nt siRNA.

It is found in the nucleus. The protein localises to the nucleoplasm. In terms of biological role, effector of RNA-directed DNA methylation (RdDM) triggered by small interfering RNAs (siRNAs, 24-nt RNAs). Functions as an adapter protein that binds scaffold transcripts generated by polymerase V and recruits AGO4 and AGO4-bound siRNAs to form an RdDM effector complex. Promotes the expression of 24-nt RNAs. Required for the initial establishment of DNA methylation. Together with AGO4, required for transcriptional gene silencing (TGS) by DNA methylation and repressive histone modifications (H3K9me2) of several chromatin loci. The polypeptide is Protein RNA-directed DNA methylation 3 (Arabidopsis thaliana (Mouse-ear cress)).